The chain runs to 526 residues: Peptide chain release factor 3 (526 aa).

One can recognise a tr-type G domain in the interval asparagine 8–glutamine 277. Residues serine 17–threonine 24, aspartate 85–histidine 89, and asparagine 139–aspartate 142 each bind GTP.

It belongs to the TRAFAC class translation factor GTPase superfamily. Classic translation factor GTPase family. PrfC subfamily.

The protein localises to the cytoplasm. Its function is as follows. Increases the formation of ribosomal termination complexes and stimulates activities of RF-1 and RF-2. It binds guanine nucleotides and has strong preference for UGA stop codons. It may interact directly with the ribosome. The stimulation of RF-1 and RF-2 is significantly reduced by GTP and GDP, but not by GMP. The polypeptide is Peptide chain release factor 3 (Actinobacillus pleuropneumoniae serotype 3 (strain JL03)).